We begin with the raw amino-acid sequence, 200 residues long: Probable nicotinate-nucleotide adenylyltransferase (200 aa).

This sequence belongs to the NadD family.

It carries out the reaction nicotinate beta-D-ribonucleotide + ATP + H(+) = deamido-NAD(+) + diphosphate. Its pathway is cofactor biosynthesis; NAD(+) biosynthesis; deamido-NAD(+) from nicotinate D-ribonucleotide: step 1/1. Catalyzes the reversible adenylation of nicotinate mononucleotide (NaMN) to nicotinic acid adenine dinucleotide (NaAD). The sequence is that of Probable nicotinate-nucleotide adenylyltransferase from Clostridium acetobutylicum (strain ATCC 824 / DSM 792 / JCM 1419 / IAM 19013 / LMG 5710 / NBRC 13948 / NRRL B-527 / VKM B-1787 / 2291 / W).